Reading from the N-terminus, the 655-residue chain is Probable alpha-galactosidase D (655 aa).

The signal sequence occupies residues 1-16 (MLPKIFYLSLLPAALG). N-linked (GlcNAc...) asparagine glycosylation is found at asparagine 47 and asparagine 91. A disulfide bridge links cysteine 124 with cysteine 155. Aspartate 153 (nucleophile) is an active-site residue. Asparagine 180 and asparagine 189 each carry an N-linked (GlcNAc...) asparagine glycan. Substrate is bound at residue 198 to 202 (EWGID). Aspartate 220 serves as the catalytic Proton donor. 7 N-linked (GlcNAc...) asparagine glycosylation sites follow: asparagine 349, asparagine 436, asparagine 458, asparagine 503, asparagine 537, asparagine 541, and asparagine 580.

The protein belongs to the glycosyl hydrolase 27 family.

The protein localises to the secreted. The enzyme catalyses Hydrolysis of terminal, non-reducing alpha-D-galactose residues in alpha-D-galactosides, including galactose oligosaccharides, galactomannans and galactolipids.. Functionally, hydrolyzes a variety of simple alpha-D-galactoside as well as more complex molecules such as oligosaccharides and polysaccharides. This chain is Probable alpha-galactosidase D (aglD), found in Aspergillus flavus (strain ATCC 200026 / FGSC A1120 / IAM 13836 / NRRL 3357 / JCM 12722 / SRRC 167).